Reading from the N-terminus, the 343-residue chain is Apolipoprotein L6 (343 aa).

Over residues 1–10 (MDNQAERESE) the composition is skewed to basic and acidic residues. The disordered stretch occupies residues 1–24 (MDNQAERESEAGVGLQRDEDDAPL).

Belongs to the apolipoprotein L family. In terms of tissue distribution, widely expressed; highly expressed in the uterus, fetal brain and spinal cord, also detected in heart, liver, lung, colon, spleen, thymus, prostate, placenta, adrenal gland, salivary and mammary gland.

It localises to the cytoplasm. In terms of biological role, may affect the movement of lipids in the cytoplasm or allow the binding of lipids to organelles. In Homo sapiens (Human), this protein is Apolipoprotein L6 (APOL6).